The sequence spans 323 residues: o-succinylbenzoate synthase (323 aa).

Catalysis depends on K134, which acts as the Proton donor. Residues D162, E191, and D214 each contribute to the Mg(2+) site. K236 acts as the Proton acceptor in catalysis.

The protein belongs to the mandelate racemase/muconate lactonizing enzyme family. MenC type 1 subfamily. It depends on a divalent metal cation as a cofactor.

The enzyme catalyses (1R,6R)-6-hydroxy-2-succinyl-cyclohexa-2,4-diene-1-carboxylate = 2-succinylbenzoate + H2O. It participates in quinol/quinone metabolism; 1,4-dihydroxy-2-naphthoate biosynthesis; 1,4-dihydroxy-2-naphthoate from chorismate: step 4/7. It functions in the pathway quinol/quinone metabolism; menaquinone biosynthesis. In terms of biological role, converts 2-succinyl-6-hydroxy-2,4-cyclohexadiene-1-carboxylate (SHCHC) to 2-succinylbenzoate (OSB). The polypeptide is o-succinylbenzoate synthase (Yersinia enterocolitica serotype O:8 / biotype 1B (strain NCTC 13174 / 8081)).